Consider the following 55-residue polypeptide: Conotoxin Cal22d (55 aa).

A propeptide spanning residues 1–5 is cleaved from the precursor; it reads GRPSA.

Contains 4 disulfide bonds. As to expression, expressed by the venom duct.

The protein localises to the secreted. In terms of biological role, probable neurotoxin with unknown target. Possibly targets ion channels. This is Conotoxin Cal22d from Californiconus californicus (California cone).